The following is a 158-amino-acid chain: SsrA-binding protein (158 aa).

The span at 136–151 shows a compositional bias: basic and acidic residues; that stretch reads KRADSKSRDWARDKQR. Residues 136 to 158 are disordered; it reads KRADSKSRDWARDKQRIMKHSTR.

This sequence belongs to the SmpB family.

The protein localises to the cytoplasm. Functionally, required for rescue of stalled ribosomes mediated by trans-translation. Binds to transfer-messenger RNA (tmRNA), required for stable association of tmRNA with ribosomes. tmRNA and SmpB together mimic tRNA shape, replacing the anticodon stem-loop with SmpB. tmRNA is encoded by the ssrA gene; the 2 termini fold to resemble tRNA(Ala) and it encodes a 'tag peptide', a short internal open reading frame. During trans-translation Ala-aminoacylated tmRNA acts like a tRNA, entering the A-site of stalled ribosomes, displacing the stalled mRNA. The ribosome then switches to translate the ORF on the tmRNA; the nascent peptide is terminated with the 'tag peptide' encoded by the tmRNA and targeted for degradation. The ribosome is freed to recommence translation, which seems to be the essential function of trans-translation. The chain is SsrA-binding protein from Photobacterium profundum (strain SS9).